The following is a 194-amino-acid chain: Fe/S biogenesis protein NfuA (194 aa).

Cysteine 152 and cysteine 155 together coordinate [4Fe-4S] cluster.

It belongs to the NfuA family. Homodimer. It depends on [4Fe-4S] cluster as a cofactor.

In terms of biological role, involved in iron-sulfur cluster biogenesis. Binds a 4Fe-4S cluster, can transfer this cluster to apoproteins, and thereby intervenes in the maturation of Fe/S proteins. Could also act as a scaffold/chaperone for damaged Fe/S proteins. This is Fe/S biogenesis protein NfuA from Azotobacter vinelandii (strain DJ / ATCC BAA-1303).